Reading from the N-terminus, the 630-residue chain is Angiotensin-converting enzyme-related protein (630 aa).

The signal sequence occupies residues 1-22 (MGACNITVLLLVIMLWLPHGLS). The Peptidase M2 domain occupies 28–615 (SASVLEARRF…SRLGVPLGWG (588 aa)). Disulfide bonds link Cys142–Cys150 and Cys344–Cys362. Zn(2+) is bound at residue His375. Glu376 (proton acceptor) is an active-site residue. Zn(2+)-binding residues include His379 and Glu403. His505 functions as the Proton donor in the catalytic mechanism. Cys530 and Cys548 are joined by a disulfide.

Belongs to the peptidase M2 family. The cofactor is Zn(2+). In terms of processing, glycosylated.

It is found in the secreted. It localises to the extracellular space. The enzyme catalyses Release of a C-terminal dipeptide, oligopeptide-|-Xaa-Yaa, when Xaa is not Pro, and Yaa is neither Asp nor Glu. Thus, conversion of angiotensin I to angiotensin II, with increase in vasoconstrictor activity, but no action on angiotensin II.. With respect to regulation, inhibited by captopril, lisinopril, trandolaprilat, fosinoprilat and enalaprilat. Its function is as follows. May be involved in the specific maturation or degradation of a number of bioactive peptides. May have a role in the specification of heart progenitors. The sequence is that of Angiotensin-converting enzyme-related protein (Acer) from Drosophila melanogaster (Fruit fly).